The sequence spans 316 residues: CD276 antigen (316 aa).

The N-terminal stretch at 1-28 is a signal peptide; it reads MLRGWGGPSVGVCVRTALGVLCLCLTGA. In terms of domain architecture, Ig-like V-type spans 29 to 139; the sequence is VEVQVSEDPV…DSAAVSLQVA (111 aa). Over 29–248 the chain is Extracellular; it reads VEVQVSEDPV…GQPLTFPPEA (220 aa). N-linked (GlcNAc...) asparagine glycosylation is found at Asn104, Asn189, and Asn215. Positions 145-238 constitute an Ig-like C2-type domain; the sequence is PSMTLEPNKD…QDAHGSVTIT (94 aa). A disulfide bridge links Cys165 with Cys220. The helical transmembrane segment at 249-269 threads the bilayer; sequence LWVTVGLSVCLVVLLVALAFV. Topologically, residues 270 to 316 are cytoplasmic; the sequence is CWRKIKQSCEEENAGAEDQDGDGEGSKTALRPLKPSENKEDDGQEIA. A compositionally biased stretch (acidic residues) spans 280 to 292; it reads EENAGAEDQDGDG. The tract at residues 280–316 is disordered; sequence EENAGAEDQDGDGEGSKTALRPLKPSENKEDDGQEIA.

Belongs to the immunoglobulin superfamily. BTN/MOG family. In terms of assembly, interacts with TREML2 and this interaction enhances T-cell activation. Ubiquitous.

Its subcellular location is the membrane. Its function is as follows. Modulates T-cell-mediated immune responses and the development of acute and chronic transplant rejection. Plays a positive regulatory role in bone formation and has a dual role in the bone-immune interface. Induces antitumor immunity as it activates both acquired and innate immunity leading to natural killer cell and CD8 T-cell dependent killing of tumor cells. The chain is CD276 antigen (Cd276) from Mus musculus (Mouse).